Here is a 130-residue protein sequence, read N- to C-terminus: T-cell receptor beta chain V region A20.2.25 (130 aa).

The signal sequence occupies residues 1 to 21 (MSCRLLLYVSLCLVETALMNT). Positions 22-112 (KITQSPRYLI…DSAVYFCASS (91 aa)) are v segment. N-linked (GlcNAc...) asparagine glycosylation is found at asparagine 36 and asparagine 75. The interval 113 to 115 (HGE) is d segment. A j segment region spans residues 116-130 (NTEVFFGKGTTLTVV).

The chain is T-cell receptor beta chain V region A20.2.25 from Mus musculus (Mouse).